The primary structure comprises 228 residues: C-type lectin domain-containing protein 88 (228 aa).

A signal peptide spans 1–18 (MQFIFFGTLFSGLLLVCA). Residue S27 is glycosylated (O-linked (Xyl...) (chondroitin sulfate) serine). Residues 88–218 (YSDSCYWVET…CTYLFYSICE (131 aa)) enclose the C-type lectin domain. Cystine bridges form between C109–C217 and C188–C209. N-linked (GlcNAc...) asparagine glycosylation is present at N220.

This is C-type lectin domain-containing protein 88 from Caenorhabditis elegans.